A 149-amino-acid polypeptide reads, in one-letter code: Transcriptional repressor NrdR (149 aa).

Residues Cys-3–Cys-34 fold into a zinc finger. Residues Ile-49 to Thr-139 form the ATP-cone domain.

This sequence belongs to the NrdR family. Zn(2+) serves as cofactor.

Its function is as follows. Negatively regulates transcription of bacterial ribonucleotide reductase nrd genes and operons by binding to NrdR-boxes. The sequence is that of Transcriptional repressor NrdR from Clostridium perfringens (strain SM101 / Type A).